Reading from the N-terminus, the 159-residue chain is Phosphopantetheine adenylyltransferase (159 aa).

Residue Thr9 participates in substrate binding. ATP is bound by residues 9–10 (TF) and His17. Substrate-binding residues include Lys41, Leu73, and Arg87. ATP-binding positions include 88 to 90 (GLR), Glu98, and 123 to 129 (YSFISST).

It belongs to the bacterial CoaD family. Homohexamer. It depends on Mg(2+) as a cofactor.

Its subcellular location is the cytoplasm. The catalysed reaction is (R)-4'-phosphopantetheine + ATP + H(+) = 3'-dephospho-CoA + diphosphate. It participates in cofactor biosynthesis; coenzyme A biosynthesis; CoA from (R)-pantothenate: step 4/5. In terms of biological role, reversibly transfers an adenylyl group from ATP to 4'-phosphopantetheine, yielding dephospho-CoA (dPCoA) and pyrophosphate. This chain is Phosphopantetheine adenylyltransferase, found in Pseudomonas putida (strain GB-1).